Consider the following 590-residue polypeptide: Cytidine monophosphate-N-acetylneuraminic acid hydroxylase (590 aa).

The Rieske domain occupies 14–112; the sequence is LSPVEVANLK…VEMDENNGLL (99 aa). The [2Fe-2S] cluster site is built by C54, H56, C75, and H78.

This sequence belongs to the CMP-Neu5Ac hydroxylase family. The cofactor is [2Fe-2S] cluster.

It localises to the cytoplasm. The catalysed reaction is CMP-N-acetyl-beta-neuraminate + 2 Fe(II)-[cytochrome b5] + O2 + 2 H(+) = CMP-N-glycoloyl-beta-neuraminate + 2 Fe(III)-[cytochrome b5] + H2O. It functions in the pathway amino-sugar metabolism; N-acetylneuraminate metabolism. In terms of biological role, sialic acids are components of carbohydrate chains of glycoconjugates and are involved in cell-cell recognition and cell-pathogen interactions. Catalyzes the conversion of CMP-N-acetylneuraminic acid (CMP-Neu5Ac) into its hydroxylated derivative CMP-N-glycolylneuraminic acid (CMP-Neu5Gc), a sialic acid abundantly expressed at the surface of many cells. In Macaca mulatta (Rhesus macaque), this protein is Cytidine monophosphate-N-acetylneuraminic acid hydroxylase (CMAH).